The chain runs to 1171 residues: Protein diaphanous homolog 3 (1171 aa).

Residues 1-15 (MERHRARALGRDSKS) are compositionally biased toward basic and acidic residues. The tract at residues 1–40 (MERHRARALGRDSKSSRRKGLQSAPPAGPYEPGEKRPKLH) is disordered. Positions 16-39 (SRRKGLQSAPPAGPYEPGEKRPKL) match the Nuclear localization signal motif. Threonine 47 carries the phosphothreonine modification. Serine 56 is subject to Phosphoserine. Residues 60–95 (PGSKKERPPLPHLKTVSGISDSSSLSSETMENNPKA) form a disordered region. The segment covering 76–86 (SGISDSSSLSS) has biased composition (low complexity). In terms of domain architecture, GBD/FH3 spans 93 to 455 (PKALPESEVL…QIVLHRDGTD (363 aa)). Serine 154 carries the post-translational modification Phosphoserine. 2 coiled-coil regions span residues 373-403 (EHKE…YSML) and 478-533 (QAKL…FGAL). The segment at 532 to 601 (ALPPGTKIPL…PPPPLGFLGG (70 aa)) is disordered. Residues 540–610 (PLQPSVEGEA…GQSSIPLNLP (71 aa)) form the FH1 domain. Over residues 553-596 (ALPPAPPALSGGVPPPPPPPPPPPPPLPGMPMPFGGPVPPPPPL) the composition is skewed to pro residues. Position 604 is a phosphoserine (serine 604). The FH2 domain maps to 615 to 1013 (PKKEFKPEIS…EKRARIAKER (399 aa)). 2 coiled-coil regions span residues 887-918 (DKAS…LETF) and 988-1038 (MLAL…GDET). One can recognise a DAD domain in the interval 1036–1066 (DETGVMDSLLEALQSGAAFRDRRKRTPKLKD). A phosphoserine mark is found at serine 1072 and serine 1157. The Nuclear export signal motif lies at 1162-1171 (EALLARLRAL).

Belongs to the formin homology family. Diaphanous subfamily. Ubiquitinated.

The protein localises to the cytoplasm. Its subcellular location is the nucleus. In terms of biological role, actin nucleation and elongation factor required for the assembly of F-actin structures, such as actin cables and stress fibers. Required for cytokinesis, stress fiber formation and transcriptional activation of the serum response factor. Binds to GTP-bound form of Rho and to profilin: acts in a Rho-dependent manner to recruit profilin to the membrane, where it promotes actin polymerization. DFR proteins couple Rho and Src tyrosine kinase during signaling and the regulation of actin dynamics. Also acts as an actin nucleation and elongation factor in the nucleus by promoting nuclear actin polymerization inside the nucleus to drive serum-dependent SRF-MRTFA activity. The protein is Protein diaphanous homolog 3 (Diaph3) of Mus musculus (Mouse).